We begin with the raw amino-acid sequence, 448 residues long: Asparagine--tRNA ligase (448 aa).

This sequence belongs to the class-II aminoacyl-tRNA synthetase family. Homodimer.

It is found in the cytoplasm. The enzyme catalyses tRNA(Asn) + L-asparagine + ATP = L-asparaginyl-tRNA(Asn) + AMP + diphosphate + H(+). The sequence is that of Asparagine--tRNA ligase from Streptococcus thermophilus (strain CNRZ 1066).